The sequence spans 296 residues: DNA primase small subunit PriS (296 aa).

Residues aspartate 82, aspartate 84, and aspartate 191 contribute to the active site.

Belongs to the eukaryotic-type primase small subunit family. Heterodimer of a small subunit (PriS) and a large subunit (PriL). Mg(2+) serves as cofactor. Mn(2+) is required as a cofactor.

Catalytic subunit of DNA primase, an RNA polymerase that catalyzes the synthesis of short RNA molecules used as primers for DNA polymerase during DNA replication. The small subunit contains the primase catalytic core and has DNA synthesis activity on its own. Binding to the large subunit stabilizes and modulates the activity, increasing the rate of DNA synthesis while decreasing the length of the DNA fragments, and conferring RNA synthesis capability. The DNA polymerase activity may enable DNA primase to also catalyze primer extension after primer synthesis. May also play a role in DNA repair. This chain is DNA primase small subunit PriS, found in Methanopyrus kandleri (strain AV19 / DSM 6324 / JCM 9639 / NBRC 100938).